Here is a 507-residue protein sequence, read N- to C-terminus: ATP synthase subunit alpha (507 aa).

Gly-170–Thr-177 is a binding site for ATP.

This sequence belongs to the ATPase alpha/beta chains family. In terms of assembly, F-type ATPases have 2 components, CF(1) - the catalytic core - and CF(0) - the membrane proton channel. CF(1) has five subunits: alpha(3), beta(3), gamma(1), delta(1), epsilon(1). CF(0) has three main subunits: a(1), b(2) and c(9-12). The alpha and beta chains form an alternating ring which encloses part of the gamma chain. CF(1) is attached to CF(0) by a central stalk formed by the gamma and epsilon chains, while a peripheral stalk is formed by the delta and b chains.

It localises to the cell inner membrane. It carries out the reaction ATP + H2O + 4 H(+)(in) = ADP + phosphate + 5 H(+)(out). Produces ATP from ADP in the presence of a proton gradient across the membrane. The alpha chain is a regulatory subunit. The sequence is that of ATP synthase subunit alpha from Thermosipho melanesiensis (strain DSM 12029 / CIP 104789 / BI429).